Here is a 392-residue protein sequence, read N- to C-terminus: Neutrophil cytosol factor 1 (392 aa).

A PX domain is found at 4–125 (HFIRHIALLG…NFFKVRPDDL (122 aa)). SH3 domains lie at 156–215 (IILQ…PLDS) and 226–285 (YAGE…KAGQ). The disordered stretch occupies residues 290–392 (AKSQIKSRGA…STKRKLASAV (103 aa)). Phosphoserine occurs at positions 304 and 305. Over residues 310-319 (HSIHQRSRKR) the composition is skewed to basic residues. Phosphoserine is present on residues serine 321, serine 329, and serine 348. Residues 376–385 (ILHRCSESTK) show a composition bias toward basic and acidic residues.

Component of the phagocyte NADPH oxidase complex composed of an obligatory core heterodimer formed by the membrane proteins CYBA and CYBB and the cytosolic regulatory subunits NCF1/p47-phox, NCF2/p67-phox, NCF4/p40-phox and the small GTPase RAC1 or RAC2. Part of a cytosolic complex composed at least by NCF1, NCF2 and NCF4. Interacts (via C-terminus) with NCF2 (via the C-terminal SH3 domain). Interacts with NCF4. Interacts with CYBB. Interacts (via the second SH3 domain) with CYBA; interaction is phosphorylation-dependent. Interacts with NOXA1. Interacts with ADAM15. Interacts with TRAF4. Interacts with FASLG. Interacts with PARK7 (via C-terminus); the interaction is enhanced by LPS and modulates NCF1 phosphorylation and membrane translocation. Post-translationally, phosphorylated by PRKCD; phosphorylation induces activation of NCF1, leading to assembly and activation of the NADPH oxidase complex.

The protein resides in the cytoplasm. Its subcellular location is the cytosol. It localises to the membrane. Functionally, subunit of the phagocyte NADPH oxidase complex that mediates the transfer of electrons from cytosolic NADPH to O2 to produce the superoxide anion (O2(-)). In the activated complex, electrons are first transferred from NADPH to flavin adenine dinucleotide (FAD) and subsequently transferred via two heme molecules to molecular oxygen, producing superoxide through an outer-sphere reaction. Activation of the NADPH oxidase complex is initiated by the assembly of cytosolic subunits of the NADPH oxidase complex with the core NADPH oxidase complex to form a complex at the plasma membrane or phagosomal membrane. This activation process is initiated by phosphorylation dependent binding of the cytosolic NCF1/p47-phox subunit to the C-terminus of CYBA/p22-phox. This Bos taurus (Bovine) protein is Neutrophil cytosol factor 1.